We begin with the raw amino-acid sequence, 26 residues long: Small toxic protein ShoB (26 aa).

The helical transmembrane segment at Leu7–Leu24 threads the bilayer.

It is found in the membrane. Functionally, toxic component of a type I toxin-antitoxin (TA) system. May be a toxic protein; overexpression causes cessation of growth and rapid membrane depolarization. Overexpression induces stress-response and a number of membrane protein genes. This chain is Small toxic protein ShoB (shoB), found in Escherichia coli (strain K12).